The sequence spans 513 residues: 5-aminolevulinate synthase, erythroid-specific, mitochondrial (513 aa).

The N-terminal 18 residues, 1-18 (MAAFLRCPLLARHPPLAR), are a transit peptide targeting the mitochondrion. Arg98 serves as a coordination point for succinyl-CoA. 2 residues coordinate pyridoxal 5'-phosphate: Cys190 and Phe191. Ser212 and Lys231 together coordinate succinyl-CoA. Pyridoxal 5'-phosphate is bound by residues Ser264, His292, and Thr320. The active site involves Lys323. Residue Lys323 is modified to N6-(pyridoxal phosphate)lysine. Positions 352 and 353 each coordinate pyridoxal 5'-phosphate. Thr437 is a binding site for succinyl-CoA.

The protein belongs to the class-II pyridoxal-phosphate-dependent aminotransferase family. As to quaternary structure, homodimer. Pyridoxal 5'-phosphate is required as a cofactor. As to expression, erythroid-specific.

The protein localises to the mitochondrion inner membrane. It catalyses the reaction succinyl-CoA + glycine + H(+) = 5-aminolevulinate + CO2 + CoA. It functions in the pathway porphyrin-containing compound metabolism; protoporphyrin-IX biosynthesis; 5-aminolevulinate from glycine: step 1/1. Catalyzes the pyridoxal 5'-phosphate (PLP)-dependent condensation of succinyl-CoA and glycine to form aminolevulinic acid (ALA), with CoA and CO2 as by-products. Contributes significantly to heme formation during erythropoiesis. The sequence is that of 5-aminolevulinate synthase, erythroid-specific, mitochondrial (ALAS2) from Gallus gallus (Chicken).